Reading from the N-terminus, the 610-residue chain is Zinc metalloproteinase-disintegrin-like brevilysin H6 (610 aa).

Residues 1-20 form the signal peptide; it reads MIQVLLVTICLAAFPYQGSS. Residues 21-191 constitute a propeptide that is removed on maturation; the sequence is IILESGNVND…ASQLNLTPEQ (171 aa). Gln192 carries the pyrrolidone carboxylic acid modification. Residues 198 to 394 form the Peptidase M12B domain; sequence RFVELVLVAD…HNPECIVNEP (197 aa). Ca(2+) is bound by residues Glu201 and Asp285. 4 cysteine pairs are disulfide-bonded: Cys309–Cys389, Cys349–Cys373, Cys351–Cys356, and Cys373–Cys378. His334 is a binding site for Zn(2+). Glu335 is a catalytic residue. Zn(2+) contacts are provided by His338 and His344. Residue Asn372 is glycosylated (N-linked (GlcNAc...) asparagine). The Ca(2+) site is built by Cys389, Asn392, Val404, Asn407, Leu409, Glu411, Glu414, and Asp417. Positions 402-488 constitute a Disintegrin domain; that stretch reads PPVCGNELLE…ECPADVFHKN (87 aa). Cystine bridges form between Cys405/Cys424, Cys405/Cys434, Cys416/Cys429, Cys416/Cys434, Cys418/Cys424, Cys428/Cys451, Cys442/Cys448, Cys447/Cys473, Cys460/Cys480, Cys467/Cys492, Cys467/Cys499, Cys492/Cys504, Cys499/Cys504, Cys511/Cys526, Cys511/Cys561, Cys526/Cys572, Cys539/Cys549, Cys549/Cys556, Cys556/Cys598, Cys561/Cys572, Cys592/Cys603, and Cys598/Cys603. The D/ECD-tripeptide motif lies at 466 to 468; that stretch reads ECD. 5 residues coordinate Ca(2+): Asp468, Pro469, Glu471, Asp483, and Val484.

Belongs to the venom metalloproteinase (M12B) family. P-III subfamily. P-IIIb sub-subfamily. Monomer. It depends on Zn(2+) as a cofactor. Post-translationally, in the absence of calcium ions, is autocatalytically degraded giving 29 (p29K) and 45 kDa (p45K) fragments. In presence of calcium ions, the p45K is not detected. In terms of tissue distribution, expressed by the venom gland.

Its subcellular location is the secreted. Its activity is regulated as follows. Inhibited by chelating agents. Calcium ions enhance its activity, they also suppress autoproteolysis, and contribute to the stability of the enzyme against pH, heating, urea and cysteine. Shows weak hemorrhagic activity. Rapidly degrades the alpha-chain of fibrinogen (FGA). This Gloydius brevicauda (Korean slamosa snake) protein is Zinc metalloproteinase-disintegrin-like brevilysin H6.